Consider the following 374-residue polypeptide: uncharacterized protein (374 aa).

The tract at residues 197–223 (GTTTTTNNNNNNNNNNNNNNNNGTNIT) is disordered. The span at 198–223 (TTTTTNNNNNNNNNNNNNNNNGTNIT) shows a compositional bias: low complexity. A coiled-coil region spans residues 302–342 (DEVSDCNDINTNLKKKRKQQEQLQIEKEKKLLTIQQEQTKI).

This is an uncharacterized protein from Dictyostelium discoideum (Social amoeba).